A 496-amino-acid polypeptide reads, in one-letter code: Inosine-5'-monophosphate dehydrogenase (496 aa).

2 CBS domains span residues 96–152 and 156–212; these read VIKD…TKKV and MTKD…PQAA. Residues D247 and 299–301 each bind NAD(+); that span reads GIG. K(+) is bound by residues G301 and G303. S304 contributes to the IMP binding site. C306 is a K(+) binding site. The active-site Thioimidate intermediate is C306. Residues 339 to 341, 362 to 363, and 386 to 390 each bind IMP; these read DGG, GS, and YRGMG. R405 functions as the Proton acceptor in the catalytic mechanism. E423 lines the IMP pocket. Residues E477, S478, and H479 each contribute to the K(+) site.

Belongs to the IMPDH/GMPR family. In terms of assembly, homotetramer. K(+) serves as cofactor.

The enzyme catalyses IMP + NAD(+) + H2O = XMP + NADH + H(+). It participates in purine metabolism; XMP biosynthesis via de novo pathway; XMP from IMP: step 1/1. Its activity is regulated as follows. Mycophenolic acid (MPA) is a non-competitive inhibitor that prevents formation of the closed enzyme conformation by binding to the same site as the amobile flap. In contrast, mizoribine monophosphate (MZP) is a competitive inhibitor that induces the closed conformation. MPA is a potent inhibitor of mammalian IMPDHs but a poor inhibitor of the bacterial enzymes. MZP is a more potent inhibitor of bacterial IMPDH. Its function is as follows. Catalyzes the conversion of inosine 5'-phosphate (IMP) to xanthosine 5'-phosphate (XMP), the first committed and rate-limiting step in the de novo synthesis of guanine nucleotides, and therefore plays an important role in the regulation of cell growth. The protein is Inosine-5'-monophosphate dehydrogenase of Methanocaldococcus jannaschii (strain ATCC 43067 / DSM 2661 / JAL-1 / JCM 10045 / NBRC 100440) (Methanococcus jannaschii).